A 119-amino-acid polypeptide reads, in one-letter code: DNA-binding protein inhibitor ID-3 (119 aa).

Residues 28-80 (RGKSPAAEEPLSLLDDMNHCYSRLRELVPGVPRGTQLSQVEILQRVIDYILDL) enclose the bHLH domain.

As to quaternary structure, homodimer, and heterodimer with other HLH proteins. Interacts with COPS5 and COPS7A. Interacts with IFI204. Interacts with GATA4 and NKX2-5. Interacts with ANKRD2; both proteins cooperate in myoblast differentiation. Interacts with CLOCK and BMAL1.

It is found in the nucleus. Transcriptional regulator (lacking a basic DNA binding domain) which negatively regulates the basic helix-loop-helix (bHLH) transcription factors by forming heterodimers and inhibiting their DNA binding and transcriptional activity. Implicated in regulating a variety of cellular processes, including cellular growth, senescence, differentiation, apoptosis, angiogenesis, and neoplastic transformation. Involved in myogenesis by inhibiting skeletal muscle and cardiac myocyte differentiation and promoting muscle precursor cells proliferation. Inhibits the binding of E2A-containing protein complexes to muscle creatine kinase E-box enhancer. Regulates the circadian clock by repressing the transcriptional activator activity of the CLOCK-BMAL1 heterodimer. The polypeptide is DNA-binding protein inhibitor ID-3 (ID3) (Bos taurus (Bovine)).